A 146-amino-acid polypeptide reads, in one-letter code: Anti-sigma F factor (146 aa).

This sequence belongs to the anti-sigma-factor family.

It catalyses the reaction L-seryl-[protein] + ATP = O-phospho-L-seryl-[protein] + ADP + H(+). The catalysed reaction is L-threonyl-[protein] + ATP = O-phospho-L-threonyl-[protein] + ADP + H(+). Functionally, binds to sigma F and blocks its ability to form an RNA polymerase holoenzyme (E-sigma F). Phosphorylates SpoIIAA on a serine residue. This phosphorylation may enable SpoIIAA to act as an anti-anti-sigma factor that counteracts SpoIIAB and thus releases sigma F from inhibition. The sequence is that of Anti-sigma F factor from Bacillus cytotoxicus (strain DSM 22905 / CIP 110041 / 391-98 / NVH 391-98).